We begin with the raw amino-acid sequence, 206 residues long: Uridine kinase (206 aa).

Position 9–16 (9–16) interacts with ATP; that stretch reads GGSGSGKT.

It belongs to the uridine kinase family.

It localises to the cytoplasm. The enzyme catalyses uridine + ATP = UMP + ADP + H(+). The catalysed reaction is cytidine + ATP = CMP + ADP + H(+). The protein operates within pyrimidine metabolism; CTP biosynthesis via salvage pathway; CTP from cytidine: step 1/3. It functions in the pathway pyrimidine metabolism; UMP biosynthesis via salvage pathway; UMP from uridine: step 1/1. This Borrelia hermsii (strain HS1 / DAH) protein is Uridine kinase.